We begin with the raw amino-acid sequence, 272 residues long: 2-amino-3,7-dideoxy-D-threo-hept-6-ulosonate synthase (272 aa).

Asp-33 functions as the Proton acceptor in the catalytic mechanism. Residues 33-37 (DHGVS) and 153-155 (YPR) contribute to the 1-deoxy-D-threo-hexo-2,5-diulose 6-phosphate site. The active-site Proton donor is Tyr-153. Lys-184 serves as the catalytic Schiff-base intermediate with substrate. 1-deoxy-D-threo-hexo-2,5-diulose 6-phosphate-binding positions include 209–210 (GG) and 237–238 (GR).

The protein belongs to the DeoC/FbaB aldolase family. ADHS subfamily. In terms of assembly, homodecamer.

It carries out the reaction 1-deoxy-D-threo-hexo-2,5-diulose 6-phosphate + L-aspartate 4-semialdehyde = 2,3-dioxopropyl phosphate + 2-amino-2,3,7-trideoxy-D-lyxo-hept-6-ulosonate. Functionally, catalyzes a transaldol reaction between 6-deoxy-5-ketofructose 1-phosphate (DKFP) and L-aspartate semialdehyde (ASA) with an elimination of hydroxypyruvaldehyde phosphate to yield 2-amino-3,7-dideoxy-D-threo-hept-6-ulosonate (ADH). Plays a key role in an alternative pathway of the biosynthesis of 3-dehydroquinate (DHQ), which is involved in the canonical pathway for the biosynthesis of aromatic amino acids. In Methanococcus maripaludis (strain C7 / ATCC BAA-1331), this protein is 2-amino-3,7-dideoxy-D-threo-hept-6-ulosonate synthase.